The primary structure comprises 126 residues: Large ribosomal subunit protein bL20c (126 aa).

Belongs to the bacterial ribosomal protein bL20 family.

It localises to the plastid. The protein resides in the chloroplast. Its function is as follows. Binds directly to 23S ribosomal RNA and is necessary for the in vitro assembly process of the 50S ribosomal subunit. It is not involved in the protein synthesizing functions of that subunit. The sequence is that of Large ribosomal subunit protein bL20c from Illicium oligandrum (Star anise).